A 776-amino-acid chain; its full sequence is DNA ligase (776 aa).

NAD(+) contacts are provided by residues 31-35, 80-81, and E112; these read DAEYD and SL. Residue K114 is the N6-AMP-lysine intermediate of the active site. R135, E172, K288, and K312 together coordinate NAD(+). Residues C406, C409, C436, and C442 each contribute to the Zn(2+) site. A BRCT domain is found at 693–776; that stretch reads AEGLPLAGQT…TFLAEQGIAV (84 aa).

This sequence belongs to the NAD-dependent DNA ligase family. LigA subfamily. Mg(2+) serves as cofactor. Requires Mn(2+) as cofactor.

It catalyses the reaction NAD(+) + (deoxyribonucleotide)n-3'-hydroxyl + 5'-phospho-(deoxyribonucleotide)m = (deoxyribonucleotide)n+m + AMP + beta-nicotinamide D-nucleotide.. Functionally, DNA ligase that catalyzes the formation of phosphodiester linkages between 5'-phosphoryl and 3'-hydroxyl groups in double-stranded DNA using NAD as a coenzyme and as the energy source for the reaction. It is essential for DNA replication and repair of damaged DNA. The chain is DNA ligase from Pseudomonas putida (strain ATCC 700007 / DSM 6899 / JCM 31910 / BCRC 17059 / LMG 24140 / F1).